Reading from the N-terminus, the 627-residue chain is Neutral endopeptidase (627 aa).

The 627-residue stretch at 1 to 627 folds into the Peptidase M13 domain; the sequence is MTRIQDDLFA…RAPENRLKIW (627 aa). His-475 lines the Zn(2+) pocket. The active site involves Glu-476. His-479 and Glu-535 together coordinate Zn(2+). Residue Asp-539 is the Proton donor of the active site.

The protein belongs to the peptidase M13 family. As to quaternary structure, monomer. Zn(2+) is required as a cofactor.

Endopeptidase with broad substrate specificity for several oligopeptides. The protein is Neutral endopeptidase (pepO) of Lactococcus lactis subsp. lactis (strain IL1403) (Streptococcus lactis).